Consider the following 271-residue polypeptide: Aquaporin-1 (271 aa).

The Cytoplasmic portion of the chain corresponds to 1 to 11 (MASEFKKKIFW). A helical transmembrane segment spans residues 12 to 29 (RAVVAEFLAMTLFIFISI). The Extracellular segment spans residues 30–48 (GSALGFQYPVRNNQTSGAA). The N-linked (GlcNAc...) asparagine glycan is linked to Asn-42. Residues 49–67 (QDNVKVSLAFGLSIATLAQ) traverse the membrane as a helical segment. Residues 68 to 70 (SVG) are Cytoplasmic-facing. Residues 71-84 (HISGAHLNPAVTLG) lie within the membrane without spanning it. Residues 78–80 (NPA) carry the NPA 1 motif. The Cytoplasmic segment spans residues 85–92 (LLLSCQIS). Residues 93–111 (VLRAVMYIIAQCVGAIVAT) form a helical membrane-spanning segment. Over 112–135 (AILSGITSSLPGNSLGLNSLAPGV) the chain is Extracellular. Residues 136–155 (DSGQGLGIEIIGTLQLVLCV) traverse the membrane as a helical segment. The Cytoplasmic portion of the chain corresponds to 156-165 (LATTDRRRRD). Residues 166–183 (LGGSAPLAIGFSVALGHL) form a helical membrane-spanning segment. The Extracellular segment spans residues 184–188 (LAIDY). The stretch at 189-201 (TGCGINPARSFGS) is an intramembrane region. Positions 194 to 196 (NPA) match the NPA 2 motif. The Extracellular portion of the chain corresponds to 202–208 (AVITHNF). The helical transmembrane segment at 209–226 (QDHWVFWVGPFIGGALAV) threads the bilayer. The Cytoplasmic portion of the chain corresponds to 227–271 (LIYDFILAPRSSDLTDRVKVWTSGQVEEYDLDGDDINSRVEMKPK). The residue at position 249 (Ser-249) is a Phosphoserine. Tyr-255 carries the post-translational modification Phosphotyrosine. At Ser-264 the chain carries Phosphoserine.

The protein belongs to the MIP/aquaporin (TC 1.A.8) family. Homotetramer; each monomer provides an independent water pore. Component of the ankyrin-1 complex in the erythrocyte, composed of ANK1, RHCE, RHAG, SLC4A1, EPB42, GYPA, GYPB and AQP1. Interacts with EPHB2; involved in endolymph production in the inner ear. Identified in a complex with STOM. Interacts (via the N-terminal) with ANK1 (via ANK 1-5 repeats). Interacts (via the C-terminal) with EPB42.

It localises to the cell membrane. It carries out the reaction H2O(in) = H2O(out). The catalysed reaction is nitric oxide(out) = nitric oxide(in). It catalyses the reaction CO2(out) = CO2(in). The enzyme catalyses glycerol(in) = glycerol(out). It carries out the reaction H2O2(out) = H2O2(in). The catalysed reaction is K(+)(in) = K(+)(out). It catalyses the reaction Na(+)(in) = Na(+)(out). Its function is as follows. Forms a water channel that facilitates the transport of water across cell membranes, playing a crucial role in water homeostasis in various tissues. Could also be permeable to small solutes including hydrogen peroxide, glycerol and gases such as amonnia (NH3), nitric oxide (NO) and carbon dioxide (CO2). Recruited to the ankyrin-1 complex, a multiprotein complex of the erythrocyte membrane, it could be part of a CO2 metabolon, linking facilitated diffusion of CO2 across the membrane, anion exchange of Cl(-)/HCO3(-) and interconversion of dissolved CO2 and carbonic acid in the cytosol. In vitro, it shows non-selective gated cation channel activity and may be permeable to cations like K(+) and Na(+) in vivo. This Sus scrofa (Pig) protein is Aquaporin-1.